The primary structure comprises 317 residues: Adenine deaminase (317 aa).

Zn(2+) contacts are provided by histidine 14, histidine 16, and histidine 194. Glutamate 197 serves as the catalytic Proton donor. Aspartate 275 is a Zn(2+) binding site. Residue aspartate 276 participates in substrate binding.

The protein belongs to the metallo-dependent hydrolases superfamily. Adenosine and AMP deaminases family. Adenine deaminase type 2 subfamily. The cofactor is Zn(2+).

The catalysed reaction is adenine + H2O + H(+) = hypoxanthine + NH4(+). Its function is as follows. Catalyzes the hydrolytic deamination of adenine to hypoxanthine. Plays an important role in the purine salvage pathway and in nitrogen catabolism. The protein is Adenine deaminase of Pseudomonas syringae pv. syringae (strain B728a).